Consider the following 1208-residue polypeptide: ATP-dependent DNA helicase Q4 (1208 aa).

Disordered regions lie at residues 17 to 180 (AFRR…ASLS) and 201 to 333 (FLGA…AGKA). Phosphoserine is present on Ser27. Positions 36–47 (EETRALYREYRT) are enriched in basic and acidic residues. Residues 61 to 70 (SSESLPAAAE) show a composition bias toward low complexity. Over residues 86 to 100 (ATKSPQSTPGRSRQG) the composition is skewed to polar residues. Ser178 and Ser180 each carry phosphoserine. The span at 273-283 (AQVQQESSQAG) shows a compositional bias: polar residues. One can recognise a Helicase ATP-binding domain in the interval 489–662 (VMRILSGIST…AQHLAVAEEP (174 aa)). An ATP-binding site is contributed by 502–509 (LPTGAGKS). The DEAH box motif lies at 605-608 (DEAH). Residues 683 to 850 (DTDQALLTLL…AVKRLVQRVF (168 aa)) enclose the Helicase C-terminal domain. Zn(2+)-binding residues include Cys853 and Cys855. Residues 860–888 (PPSEQEGAVGGERPVPKYPPQEAEQLSHQ) are disordered. Residues Cys897 and His900 each coordinate Zn(2+). The disordered stretch occupies residues 1111–1130 (EEGQEPGGMEDAQGPEPGQA). The tract at residues 1117–1208 (GGMEDAQGPE…ATEELLQVAR (92 aa)) is increases helicase activity about 5-fold (in a fragment starting at residue 427).

It belongs to the helicase family. RecQ subfamily. As to quaternary structure, interacts with UBR1 and UBR2. Interacts with MCM10; this interaction regulates RECQL4 unwinding activity. Interacts (via residues 1-54) with TOPBP1. It depends on Zn(2+) as a cofactor. Ubiquitously expressed, with highest levels in thymus and testis.

It localises to the cytoplasm. It is found in the nucleus. The catalysed reaction is Couples ATP hydrolysis with the unwinding of duplex DNA by translocating in the 3'-5' direction.. It catalyses the reaction ATP + H2O = ADP + phosphate + H(+). An ATP-dependent DNA helicase which unwinds dsDNA with a 3'-overhang in a 3'-5' direction. Does not unwind more than 18 bp of dsDNA. May modulate chromosome segregation. The N-terminal domain (residues 1-54) binds DNA Y-shaped DNA better than ss- or dsDNA. The core helicase domain binds ssDNA. This is ATP-dependent DNA helicase Q4 (RECQL4) from Homo sapiens (Human).